Here is a 134-residue protein sequence, read N- to C-terminus: Profilin-3 (134 aa).

Cys-13 and Cys-118 form a disulfide bridge. Positions 84–100 (AVIRGKKGSGGITIKKT) match the Involved in PIP2 interaction motif. Residue Thr-114 is modified to Phosphothreonine.

This sequence belongs to the profilin family. As to quaternary structure, occurs in many kinds of cells as a complex with monomeric actin in a 1:1 ratio. Post-translationally, phosphorylated by MAP kinases.

It is found in the cytoplasm. The protein resides in the cytoskeleton. Its function is as follows. Binds to actin and affects the structure of the cytoskeleton. At high concentrations, profilin prevents the polymerization of actin, whereas it enhances it at low concentrations. The polypeptide is Profilin-3 (Olea europaea (Common olive)).